The chain runs to 289 residues: ATP synthase gamma chain (289 aa).

It belongs to the ATPase gamma chain family. As to quaternary structure, F-type ATPases have 2 components, CF(1) - the catalytic core - and CF(0) - the membrane proton channel. CF(1) has five subunits: alpha(3), beta(3), gamma(1), delta(1), epsilon(1). CF(0) has three main subunits: a, b and c.

Its subcellular location is the cell inner membrane. Its function is as follows. Produces ATP from ADP in the presence of a proton gradient across the membrane. The gamma chain is believed to be important in regulating ATPase activity and the flow of protons through the CF(0) complex. This Janthinobacterium sp. (strain Marseille) (Minibacterium massiliensis) protein is ATP synthase gamma chain.